The chain runs to 466 residues: Probable agmatine/putrescine antiporter AguD (466 aa).

A run of 12 helical transmembrane segments spans residues 8–28 (FSLFSAILSVICVVFVAEAAA), 30–50 (VAAIGNSQFFWWIVLIVAFLL), 85–105 (ASWFYWVNFPLWMASLAVLCP), 120–140 (ISLLIELIFIWVIVLISLYPV), 144–164 (VWILNGGAVIKVFLALALGGL), 192–212 (LSFISVIIFNLLGFEVICTFA), 226–246 (IIIGGIVIAAIYMFSAFGIGV), 273–293 (WFISLIAFLFMLTLVGNMVSW), 325–345 (WGAALMNGIVATFIVVIAPLL), 350–370 (LFWSFFSLNLVLFLLSYIPVF), 398–418 (VYMALPMIIIIISLIFTAIPL), and 426–446 (TEQLPITIGAIIFIVIGELII).

The protein belongs to the amino acid-polyamine-organocation (APC) superfamily. Glutamate:GABA antiporter (GGA) (TC 2.A.3.7) family.

It is found in the cell membrane. Probably catalyzes agmatine/putrescine exchange. The polypeptide is Probable agmatine/putrescine antiporter AguD (Lactococcus lactis subsp. lactis (strain IL1403) (Streptococcus lactis)).